The chain runs to 142 residues: Small ribosomal subunit protein uS12 (142 aa).

This sequence belongs to the universal ribosomal protein uS12 family. As to quaternary structure, part of the 30S ribosomal subunit.

In terms of biological role, with S4 and S5 plays an important role in translational accuracy. Located at the interface of the 30S and 50S subunits. In Archaeoglobus fulgidus (strain ATCC 49558 / DSM 4304 / JCM 9628 / NBRC 100126 / VC-16), this protein is Small ribosomal subunit protein uS12.